The following is a 631-amino-acid chain: Phosphomethylpyrimidine synthase (631 aa).

Substrate contacts are provided by residues Asn-239, Met-268, Tyr-297, His-333, 353–355 (SRG), 394–397 (DGLR), and Glu-433. Residue His-437 coordinates Zn(2+). Residue Tyr-460 participates in substrate binding. A Zn(2+)-binding site is contributed by His-501. [4Fe-4S] cluster is bound by residues Cys-581, Cys-584, and Cys-589.

Belongs to the ThiC family. Homodimer. [4Fe-4S] cluster serves as cofactor.

The enzyme catalyses 5-amino-1-(5-phospho-beta-D-ribosyl)imidazole + S-adenosyl-L-methionine = 4-amino-2-methyl-5-(phosphooxymethyl)pyrimidine + CO + 5'-deoxyadenosine + formate + L-methionine + 3 H(+). Its pathway is cofactor biosynthesis; thiamine diphosphate biosynthesis. In terms of biological role, catalyzes the synthesis of the hydroxymethylpyrimidine phosphate (HMP-P) moiety of thiamine from aminoimidazole ribotide (AIR) in a radical S-adenosyl-L-methionine (SAM)-dependent reaction. In Salmonella enteritidis PT4 (strain P125109), this protein is Phosphomethylpyrimidine synthase.